The sequence spans 95 residues: MGSKNNSRAKILVRGKVQGVGFRYYILQRAQECRLSGYTQNLPGGEVETVVEGDKMFIEDLYRAIQRGPKGSEVKEALITWEDPKGNFRTFEIKK.

The region spanning 8–95 (RAKILVRGKV…GNFRTFEIKK (88 aa)) is the Acylphosphatase-like domain. Active-site residues include Arg-23 and Asn-41.

This sequence belongs to the acylphosphatase family.

It catalyses the reaction an acyl phosphate + H2O = a carboxylate + phosphate + H(+). This Leptospira interrogans serogroup Icterohaemorrhagiae serovar copenhageni (strain Fiocruz L1-130) protein is Acylphosphatase (acyP).